The following is a 151-amino-acid chain: 3-hydroxyacyl-[acyl-carrier-protein] dehydratase FabZ (151 aa).

The active site involves His-49.

Belongs to the thioester dehydratase family. FabZ subfamily.

It is found in the cytoplasm. It catalyses the reaction a (3R)-hydroxyacyl-[ACP] = a (2E)-enoyl-[ACP] + H2O. Its function is as follows. Involved in unsaturated fatty acids biosynthesis. Catalyzes the dehydration of short chain beta-hydroxyacyl-ACPs and long chain saturated and unsaturated beta-hydroxyacyl-ACPs. The chain is 3-hydroxyacyl-[acyl-carrier-protein] dehydratase FabZ from Bordetella bronchiseptica (strain ATCC BAA-588 / NCTC 13252 / RB50) (Alcaligenes bronchisepticus).